Reading from the N-terminus, the 444-residue chain is Protein translocase subunit SecY (444 aa).

Transmembrane regions (helical) follow at residues 24-44 (FFVIGALLVFRAGSFVPIPGI), 77-97 (ILALGIMPYISASIVVQLLTV), 123-143 (GTLVLATFQAIGIATGLPNMV), 153-173 (MFTLIATVSLVTGTMFLMWLG), 181-201 (IGNGISILIFAGIVAGLPKAI), 215-235 (VLLLLLIAVLAFAVIYFVVFM), 269-289 (MAGVIPAIFASSIILFPGTLA), 318-338 (YVMLYAAAIIFFCFFYTALVF), 376-396 (LAGALYITFICLIPEFMMVAW), and 400-420 (FYFGGTSLLIVVVVIMDFMAQ).

Belongs to the SecY/SEC61-alpha family. In terms of assembly, component of the Sec protein translocase complex. Heterotrimer consisting of SecY, SecE and SecG subunits. The heterotrimers can form oligomers, although 1 heterotrimer is thought to be able to translocate proteins. Interacts with the ribosome. Interacts with SecDF, and other proteins may be involved. Interacts with SecA.

The protein resides in the cell inner membrane. In terms of biological role, the central subunit of the protein translocation channel SecYEG. Consists of two halves formed by TMs 1-5 and 6-10. These two domains form a lateral gate at the front which open onto the bilayer between TMs 2 and 7, and are clamped together by SecE at the back. The channel is closed by both a pore ring composed of hydrophobic SecY resides and a short helix (helix 2A) on the extracellular side of the membrane which forms a plug. The plug probably moves laterally to allow the channel to open. The ring and the pore may move independently. The protein is Protein translocase subunit SecY of Vibrio cholerae serotype O1 (strain ATCC 39315 / El Tor Inaba N16961).